Reading from the N-terminus, the 81-residue chain is Cytotoxin (81 aa).

The signal sequence occupies residues 1–21 (MKTLLLTTVVVTIVCLDLEYT). Cystine bridges form between C24–C42, C35–C59, C63–C74, and C75–C80.

This sequence belongs to the three-finger toxin family. Short-chain subfamily. Type IA cytotoxin sub-subfamily. In terms of assembly, monomer in solution; Homodimer and oligomer in the presence of negatively charged lipids forming a pore with a size ranging between 20 and 30 Angstroms. In terms of tissue distribution, expressed by the venom gland.

It localises to the secreted. Its subcellular location is the target cell membrane. Its function is as follows. Shows cytolytic activity on many different cells by forming pore in lipid membranes. In vivo, increases heart rate or kills the animal by cardiac arrest. In addition, it binds to heparin with high affinity, interacts with Kv channel-interacting protein 1 (KCNIP1) in a calcium-independent manner, and binds to integrin alpha-V/beta-3 (ITGAV/ITGB3) with moderate affinity. The protein is Cytotoxin of Naja sputatrix (Malayan spitting cobra).